A 105-amino-acid polypeptide reads, in one-letter code: Small ribosomal subunit protein uS10 (105 aa).

Belongs to the universal ribosomal protein uS10 family. Part of the 30S ribosomal subunit.

In terms of biological role, involved in the binding of tRNA to the ribosomes. The polypeptide is Small ribosomal subunit protein uS10 (Synechocystis sp. (strain ATCC 27184 / PCC 6803 / Kazusa)).